The primary structure comprises 140 residues: HTH-type transcriptional regulator AdhR (140 aa).

An HTH merR-type domain is found at 1-69; sequence MNIAQVAKQF…IEALIEYTTL (69 aa). Positions 3–22 form a DNA-binding region, H-T-H motif; that stretch reads IAQVAKQFGLTAATLRYYER. Positions 75-125 form a coiled coil; it reads RTVEARKNILADERQRLIEKRKEIDETIKRLDTKIKDYDGKLRENEAKLKS. The disordered stretch occupies residues 120-140; the sequence is EAKLKSRPKTESLHGSVEQRR.

Its function is as follows. Transcriptional regulator involved in the response to aldehyde stress. Binds to the promoter region of the adhA-yraA operon, the yraC and its own promoter region; binding is unchanged in the presence of aldehydes. In Bacillus subtilis (strain 168), this protein is HTH-type transcriptional regulator AdhR (adhR).